The primary structure comprises 482 residues: ATP synthase subunit beta, chloroplastic (482 aa).

Residue 162–169 (GGAGVGKT) participates in ATP binding.

This sequence belongs to the ATPase alpha/beta chains family. As to quaternary structure, F-type ATPases have 2 components, CF(1) - the catalytic core - and CF(0) - the membrane proton channel. CF(1) has five subunits: alpha(3), beta(3), gamma(1), delta(1), epsilon(1). CF(0) has four main subunits: a(1), b(1), b'(1) and c(9-12).

The protein localises to the plastid. Its subcellular location is the chloroplast thylakoid membrane. The catalysed reaction is ATP + H2O + 4 H(+)(in) = ADP + phosphate + 5 H(+)(out). Produces ATP from ADP in the presence of a proton gradient across the membrane. The catalytic sites are hosted primarily by the beta subunits. The protein is ATP synthase subunit beta, chloroplastic of Pleurastrum terricola (Filamentous green alga).